The following is a 533-amino-acid chain: Protein trichome birefringence-like 18 (533 aa).

The helical; Signal-anchor for type II membrane protein transmembrane segment at 21–41 (VSTVAIAIGGLASFFVFGLLL) threads the bilayer. Positions 93 to 171 (SDSSSGLPVV…PDDVSETASA (79 aa)) are disordered. Basic and acidic residues predominate over residues 113 to 154 (SSDRKLETPLTQEKEDLVSSDITEKTDVQSGERETNVSKAED). The short motif at 248–250 (GDS) is the GDS motif element. The interval 475–502 (HDGHPGPFRSPDPNKITKRGPDGRPPPQ) is disordered. Positions 503-517 (DCLHWCMPGPVDTWN) match the DCXHWCLPGXXDXWN motif motif.

Belongs to the PC-esterase family. TBL subfamily.

The protein localises to the membrane. Functionally, may act as a bridging protein that binds pectin and other cell wall polysaccharides. Probably involved in maintaining esterification of pectins. May be involved in the specific O-acetylation of cell wall polymers. This chain is Protein trichome birefringence-like 18 (TBL18), found in Arabidopsis thaliana (Mouse-ear cress).